The primary structure comprises 699 residues: TPR repeat-containing thioredoxin TTL1 (699 aa).

Positions 1–211 are disordered; sequence MPKSVKPISE…SSSRSSSTVA (211 aa). The segment covering 9–20 has biased composition (basic and acidic residues); sequence SESDKLSDHLRD. Phosphoserine occurs at positions 39 and 42. Composition is skewed to low complexity over residues 52 to 70 and 83 to 135; these read TTTT…SSGS and RSNS…TSPA. Positions 166 to 182 are enriched in gly residues; that stretch reads SGTGTYGHGSIMRGGGI. Low complexity predominate over residues 195–210; sequence NSPVNVGSSSRSSSTV. TPR repeat units lie at residues 227–260, 262–294, 296–328, 419–452, 465–498, 499–532, and 534–566; these read SEEV…SPTN, AYRS…DPNY, RAHH…SDPM, AYIY…DPRC, VARA…DPCN, AILY…QPSY, and KPLL…LPHD. The Thioredoxin domain maps to 605 to 691; that stretch reads QFKSAMNLPG…IVCPSKEVLE (87 aa).

In terms of tissue distribution, expressed in the root elongation zone, stele, root cap, embryo vascular system, leaf axilar buds, silique abscission zone and guard cells.

Its function is as follows. Involved in responses to osmotic stress and abscisic acid (ABA). May act as a positive regulator of ABA signaling during germination and seedling development under stress. This Arabidopsis thaliana (Mouse-ear cress) protein is TPR repeat-containing thioredoxin TTL1 (TTL1).